The primary structure comprises 96 residues: Colicin-K immunity protein (96 aa).

The helical transmembrane segment at 73–93 (ALFYLLMAIPVGLPSFIYYTL) threads the bilayer.

The protein resides in the cell membrane. Its function is as follows. This protein is able to protect a cell, which harbors the plasmid ColK encoding colicin K, against colicin K. The protein is Colicin-K immunity protein (cki) of Escherichia coli.